A 300-amino-acid chain; its full sequence is Cation-efflux pump FieF (300 aa).

A helical transmembrane segment spans residues Leu24 to Val44. Positions 45 and 49 each coordinate Zn(2+). A run of 2 helical transmembrane segments spans residues Ala82 to Ile102 and Pro114 to Phe134. Positions 153 and 157 each coordinate Zn(2+). 2 consecutive transmembrane segments (helical) span residues Ser156 to His176 and Ala178 to Gly198.

Belongs to the cation diffusion facilitator (CDF) transporter (TC 2.A.4) family. FieF subfamily. In terms of assembly, homodimer.

The protein resides in the cell inner membrane. The catalysed reaction is Zn(2+)(in) + H(+)(out) = Zn(2+)(out) + H(+)(in). The enzyme catalyses Cd(2+)(in) + H(+)(out) = Cd(2+)(out) + H(+)(in). It carries out the reaction Fe(2+)(in) + H(+)(out) = Fe(2+)(out) + H(+)(in). Its function is as follows. Divalent metal cation transporter which exports Zn(2+), Cd(2+) and possibly Fe(2+). May be involved in zinc and iron detoxification by efflux. This Salmonella schwarzengrund (strain CVM19633) protein is Cation-efflux pump FieF.